Here is a 353-residue protein sequence, read N- to C-terminus: Uroporphyrinogen decarboxylase (353 aa).

Substrate is bound by residues 25-29, D74, Y151, S206, and H325; that span reads RQAGR.

This sequence belongs to the uroporphyrinogen decarboxylase family. In terms of assembly, homodimer.

It localises to the cytoplasm. The enzyme catalyses uroporphyrinogen III + 4 H(+) = coproporphyrinogen III + 4 CO2. It functions in the pathway porphyrin-containing compound metabolism; protoporphyrin-IX biosynthesis; coproporphyrinogen-III from 5-aminolevulinate: step 4/4. Catalyzes the decarboxylation of four acetate groups of uroporphyrinogen-III to yield coproporphyrinogen-III. This chain is Uroporphyrinogen decarboxylase, found in Chloroherpeton thalassium (strain ATCC 35110 / GB-78).